The following is a 353-amino-acid chain: NADH-quinone oxidoreductase subunit H (353 aa).

9 consecutive transmembrane segments (helical) span residues 8–28 (LLVYLVILFGFVIVSVLIFIW), 75–95 (GVFWLAPLVAFVPVMLMFAAI), 108–128 (IGILYILAVSSVTVIGIFMAG), 148–168 (VSYEIPLVLSILGVVMLTGSL), 179–199 (VPFILLQPLGFFVYLSAAMAE), 229–249 (LFYLMEYAEVLAVSAIATTLF), 258–278 (LHPVFWFIAKILLVFMFIIWV), 297–317 (FLLPLSLANLVITAFEILIAP), and 319–339 (INTAVLIGINIAVMFGLVLLF).

It belongs to the complex I subunit 1 family. NDH-1 is composed of 14 different subunits. Subunits NuoA, H, J, K, L, M, N constitute the membrane sector of the complex.

The protein localises to the cell membrane. It carries out the reaction a quinone + NADH + 5 H(+)(in) = a quinol + NAD(+) + 4 H(+)(out). In terms of biological role, NDH-1 shuttles electrons from NADH, via FMN and iron-sulfur (Fe-S) centers, to quinones in the respiratory chain. The immediate electron acceptor for the enzyme in this species is believed to be ubiquinone. Couples the redox reaction to proton translocation (for every two electrons transferred, four hydrogen ions are translocated across the cytoplasmic membrane), and thus conserves the redox energy in a proton gradient. This subunit may bind ubiquinone. The polypeptide is NADH-quinone oxidoreductase subunit H (Dehalococcoides mccartyi (strain CBDB1)).